A 143-amino-acid polypeptide reads, in one-letter code: D-aminoacyl-tRNA deacylase (143 aa).

The Gly-cisPro motif, important for rejection of L-amino acids motif lies at 135–136 (GP).

It belongs to the DTD family. In terms of assembly, homodimer.

Its subcellular location is the cytoplasm. It catalyses the reaction glycyl-tRNA(Ala) + H2O = tRNA(Ala) + glycine + H(+). It carries out the reaction a D-aminoacyl-tRNA + H2O = a tRNA + a D-alpha-amino acid + H(+). An aminoacyl-tRNA editing enzyme that deacylates mischarged D-aminoacyl-tRNAs. Also deacylates mischarged glycyl-tRNA(Ala), protecting cells against glycine mischarging by AlaRS. Acts via tRNA-based rather than protein-based catalysis; rejects L-amino acids rather than detecting D-amino acids in the active site. By recycling D-aminoacyl-tRNA to D-amino acids and free tRNA molecules, this enzyme counteracts the toxicity associated with the formation of D-aminoacyl-tRNA entities in vivo and helps enforce protein L-homochirality. The polypeptide is D-aminoacyl-tRNA deacylase (Nocardia farcinica (strain IFM 10152)).